The following is a 185-amino-acid chain: Large ribosomal subunit protein uL22 (185 aa).

The protein belongs to the universal ribosomal protein uL22 family. Part of the 50S ribosomal subunit.

Its function is as follows. This protein binds specifically to 23S rRNA. It makes multiple contacts with different domains of the 23S rRNA in the assembled 50S subunit and ribosome. In terms of biological role, the globular domain of the protein is located near the polypeptide exit tunnel on the outside of the subunit, while an extended beta-hairpin is found that lines the wall of the exit tunnel in the center of the 70S ribosome. The sequence is that of Large ribosomal subunit protein uL22 from Pyrobaculum neutrophilum (strain DSM 2338 / JCM 9278 / NBRC 100436 / V24Sta) (Thermoproteus neutrophilus).